We begin with the raw amino-acid sequence, 344 residues long: Dihydroorotate dehydrogenase (quinone) (344 aa).

FMN-binding positions include 61-65 and Thr-85; that span reads AGLDK. Lys-65 serves as a coordination point for substrate. A substrate-binding site is contributed by 110–114; that stretch reads NRMGF. Asn-138 and Asn-171 together coordinate FMN. A substrate-binding site is contributed by Asn-171. Ser-174 serves as the catalytic Nucleophile. Asn-176 lines the substrate pocket. The FMN site is built by Lys-216 and Thr-244. Residue 245-246 participates in substrate binding; sequence NT. Residues Gly-267, Gly-296, and 317–318 contribute to the FMN site; that span reads YS.

The protein belongs to the dihydroorotate dehydrogenase family. Type 2 subfamily. As to quaternary structure, monomer. FMN is required as a cofactor.

The protein resides in the cell membrane. It catalyses the reaction (S)-dihydroorotate + a quinone = orotate + a quinol. It participates in pyrimidine metabolism; UMP biosynthesis via de novo pathway; orotate from (S)-dihydroorotate (quinone route): step 1/1. Functionally, catalyzes the conversion of dihydroorotate to orotate with quinone as electron acceptor. This Psychrobacter sp. (strain PRwf-1) protein is Dihydroorotate dehydrogenase (quinone).